A 310-amino-acid polypeptide reads, in one-letter code: Tagatose-6-phosphate kinase (310 aa).

This sequence belongs to the carbohydrate kinase PfkB family. LacC subfamily.

It carries out the reaction D-tagatofuranose 6-phosphate + ATP = D-tagatofuranose 1,6-bisphosphate + ADP + H(+). It functions in the pathway carbohydrate metabolism; D-tagatose 6-phosphate degradation; D-glyceraldehyde 3-phosphate and glycerone phosphate from D-tagatose 6-phosphate: step 1/2. This Streptococcus agalactiae serotype V (strain ATCC BAA-611 / 2603 V/R) protein is Tagatose-6-phosphate kinase.